Reading from the N-terminus, the 98-residue chain is Small ribosomal subunit protein eS24 (98 aa).

The protein belongs to the eukaryotic ribosomal protein eS24 family.

This is Small ribosomal subunit protein eS24 from Thermococcus sibiricus (strain DSM 12597 / MM 739).